We begin with the raw amino-acid sequence, 257 residues long: Tryptophan synthase alpha chain (257 aa).

Active-site proton acceptor residues include Glu44 and Asp55.

It belongs to the TrpA family. Tetramer of two alpha and two beta chains.

It carries out the reaction (1S,2R)-1-C-(indol-3-yl)glycerol 3-phosphate + L-serine = D-glyceraldehyde 3-phosphate + L-tryptophan + H2O. It participates in amino-acid biosynthesis; L-tryptophan biosynthesis; L-tryptophan from chorismate: step 5/5. In terms of biological role, the alpha subunit is responsible for the aldol cleavage of indoleglycerol phosphate to indole and glyceraldehyde 3-phosphate. In Chlamydia felis (strain Fe/C-56) (Chlamydophila felis), this protein is Tryptophan synthase alpha chain.